We begin with the raw amino-acid sequence, 142 residues long: 3-hydroxyacyl-[acyl-carrier-protein] dehydratase FabZ (142 aa).

Residue His46 is part of the active site.

This sequence belongs to the thioester dehydratase family. FabZ subfamily.

It is found in the cytoplasm. It catalyses the reaction a (3R)-hydroxyacyl-[ACP] = a (2E)-enoyl-[ACP] + H2O. Involved in unsaturated fatty acids biosynthesis. Catalyzes the dehydration of short chain beta-hydroxyacyl-ACPs and long chain saturated and unsaturated beta-hydroxyacyl-ACPs. The polypeptide is 3-hydroxyacyl-[acyl-carrier-protein] dehydratase FabZ (Thermus thermophilus (strain ATCC BAA-163 / DSM 7039 / HB27)).